We begin with the raw amino-acid sequence, 379 residues long: Flagellar P-ring protein (379 aa).

The N-terminal stretch at 1–32 is a signal peptide; it reads MTAPAGFLPRVGRLIAVALTAVFLLAPTGAEA.

This sequence belongs to the FlgI family. As to quaternary structure, the basal body constitutes a major portion of the flagellar organelle and consists of four rings (L,P,S, and M) mounted on a central rod.

It is found in the periplasm. The protein localises to the bacterial flagellum basal body. Functionally, assembles around the rod to form the L-ring and probably protects the motor/basal body from shearing forces during rotation. The sequence is that of Flagellar P-ring protein from Rhodospirillum rubrum (strain ATCC 11170 / ATH 1.1.1 / DSM 467 / LMG 4362 / NCIMB 8255 / S1).